The sequence spans 145 residues: Small ribosomal subunit protein eS19 (145 aa).

It belongs to the eukaryotic ribosomal protein eS19 family. Component of the small ribosomal subunit.

The protein localises to the cytoplasm. It localises to the nucleus. In terms of biological role, component of the small ribosomal subunit. The ribosome is a large ribonucleoprotein complex responsible for the synthesis of proteins in the cell. Required for pre-rRNA processing and maturation of 40S ribosomal subunits. The polypeptide is Small ribosomal subunit protein eS19 (rps19) (Myxine glutinosa (Atlantic hagfish)).